Here is a 260-residue protein sequence, read N- to C-terminus: Hemin import ATP-binding protein HmuV (260 aa).

An ABC transporter domain is found at 7–243; sequence IQASNISVTF…ERIEQVYGYS (237 aa). 39-46 lines the ATP pocket; that stretch reads GPNGAGKS.

Belongs to the ABC transporter superfamily. Heme (hemin) importer (TC 3.A.1.14.5) family. The complex is composed of two ATP-binding proteins (HmuV), two transmembrane proteins (HmuU) and a solute-binding protein (HmuT).

The protein localises to the cell inner membrane. Functionally, part of the ABC transporter complex HmuTUV involved in hemin import. Responsible for energy coupling to the transport system. The protein is Hemin import ATP-binding protein HmuV of Vibrio anguillarum (strain ATCC 68554 / 775) (Listonella anguillarum).